Here is a 332-residue protein sequence, read N- to C-terminus: Fructose-1,6-bisphosphatase class 1 (332 aa).

E89, D110, L112, and D113 together coordinate Mg(2+). Substrate contacts are provided by residues 113–116, N206, Y239, 257–259, and K269; these read DGSS and YLY. Position 275 (E275) interacts with Mg(2+).

Belongs to the FBPase class 1 family. As to quaternary structure, homotetramer. It depends on Mg(2+) as a cofactor.

It localises to the cytoplasm. It carries out the reaction beta-D-fructose 1,6-bisphosphate + H2O = beta-D-fructose 6-phosphate + phosphate. The protein operates within carbohydrate biosynthesis; gluconeogenesis. The sequence is that of Fructose-1,6-bisphosphatase class 1 from Citrobacter koseri (strain ATCC BAA-895 / CDC 4225-83 / SGSC4696).